We begin with the raw amino-acid sequence, 404 residues long: DNA polymerase processivity factor BMRF1 (404 aa).

A homodimerization; DNA binding and DNA polymerase processivity region spans residues 1 to 300 (METTQTLRFK…SVILFNHASE (300 aa)). The tract at residues 301–404 (EAAASTASEP…KVKQAFNPLI (104 aa)) is transcriptional activation. The tract at residues 302–404 (AAASTASEPE…KVKQAFNPLI (103 aa)) is disordered. Positions 335–344 (SPSPPPPPRT) are enriched in pro residues. The residue at position 337 (S337) is a Phosphoserine. Phosphothreonine is present on T344. S349 is modified (phosphoserine). Phosphothreonine is present on T355.

The protein belongs to the herpesviridae DNA polymerase accessory subunit family. As to quaternary structure, homodimer. Two dimers can adopt a tetrameric ring-like structure. Forms a complex with the DNA-binding protein BALF2, the DNA polymerase subunit BALF5, and the alkaline exonuclease BGLF5. Interacts (via N-terminus) with BZLF1 (via bZIP domain); this interaction may inhibit BZLF1-induced transcription of the BMRF1 promoter. Interacts (via C-terminus) with host NuRD complex; this interaction is important for transcriptional activation of EBV promoters and inhibition of the ubiquitination step of DDR signaling. Phosphorylated by the viral BGLF4 kinase.

The protein resides in the virion tegument. It is found in the host nucleus. In terms of biological role, acts as a DNA polymerase processivity factor; a transcriptional activator for several EBV promoters and inhibits the host DNA damage response (DDR) to double-stranded DNA breaks. Plays an essential role in the viral lytic DNA replication by acting as a polymerase accessory subunit. Stimulates the viral DNA polymerase activity and appears to function with it as a holoenzyme. Increases the processivity of the viral polymerase, probably by acting as a sliding clamp that prevents dissociation of the polymerase from the active template. In addition, BMRF1 transcriptionally activates the oriLyt early BHLF1 promoter. Promotes G1/S cell cycle arrest through p53 induction. The chain is DNA polymerase processivity factor BMRF1 from Epstein-Barr virus (strain AG876) (HHV-4).